Consider the following 365-residue polypeptide: Histidinol-phosphate aminotransferase (365 aa).

Residues 1 to 22 are disordered; sequence MSRPVPNPGILDIAPYTPGKSP. Position 221 is an N6-(pyridoxal phosphate)lysine (lysine 221).

It belongs to the class-II pyridoxal-phosphate-dependent aminotransferase family. Histidinol-phosphate aminotransferase subfamily. Homodimer. The cofactor is pyridoxal 5'-phosphate.

It catalyses the reaction L-histidinol phosphate + 2-oxoglutarate = 3-(imidazol-4-yl)-2-oxopropyl phosphate + L-glutamate. It participates in amino-acid biosynthesis; L-histidine biosynthesis; L-histidine from 5-phospho-alpha-D-ribose 1-diphosphate: step 7/9. This chain is Histidinol-phosphate aminotransferase, found in Rhodopseudomonas palustris (strain BisA53).